The following is a 125-amino-acid chain: Fluoride-specific ion channel FluC (125 aa).

A run of 4 helical transmembrane segments spans residues 7 to 27 (FFIV…MAVV), 36 to 56 (GFPY…GFLS), 63 to 83 (PYGR…FSTF), and 96 to 116 (FIFA…GVFC). The Na(+) site is built by G75 and T78.

The protein belongs to the fluoride channel Fluc/FEX (TC 1.A.43) family.

It localises to the cell inner membrane. The catalysed reaction is fluoride(in) = fluoride(out). Na(+) is not transported, but it plays an essential structural role and its presence is essential for fluoride channel function. Its function is as follows. Fluoride-specific ion channel. Important for reducing fluoride concentration in the cell, thus reducing its toxicity. The chain is Fluoride-specific ion channel FluC from Elusimicrobium minutum (strain Pei191).